Reading from the N-terminus, the 694-residue chain is Polyphosphate kinase (694 aa).

Position 45 (Asn45) interacts with ATP. Residues Arg367 and Arg397 each coordinate Mg(2+). Catalysis depends on His427, which acts as the Phosphohistidine intermediate. Positions 460, 553, and 580 each coordinate ATP.

This sequence belongs to the polyphosphate kinase 1 (PPK1) family. Mg(2+) is required as a cofactor. An intermediate of this reaction is the autophosphorylated ppk in which a phosphate is covalently linked to a histidine residue through a N-P bond.

The catalysed reaction is [phosphate](n) + ATP = [phosphate](n+1) + ADP. In terms of biological role, catalyzes the reversible transfer of the terminal phosphate of ATP to form a long-chain polyphosphate (polyP). This chain is Polyphosphate kinase, found in Campylobacter jejuni (strain RM1221).